Here is a 211-residue protein sequence, read N- to C-terminus: MGRYIGPWVKLDRRFGVVVSGKKSAPKILARRNYPPGQHGRKYGRRKKLTEYGLRLMEKQKLKFLYGGLREKQFKKYFDMASKSKENTGEMLLQYLERRLDNVVYRLGFASTRRQARQLVAHGHVLVNGKKVNIPSYLVEPGDVIEIKEKSRDIPFIKENLENVDPRSIPSWLELDKDNFRGRVVRLPENVQEYLEIPINLQYIVEFYSKV.

Residues 98 to 161 enclose the S4 RNA-binding domain; that stretch reads RRLDNVVYRL…RDIPFIKENL (64 aa).

The protein belongs to the universal ribosomal protein uS4 family. Part of the 30S ribosomal subunit. Contacts protein S5. The interaction surface between S4 and S5 is involved in control of translational fidelity.

In terms of biological role, one of the primary rRNA binding proteins, it binds directly to 16S rRNA where it nucleates assembly of the body of the 30S subunit. With S5 and S12 plays an important role in translational accuracy. The protein is Small ribosomal subunit protein uS4 of Aquifex aeolicus (strain VF5).